The chain runs to 155 residues: Small ribosomal subunit protein uS7c (155 aa).

Belongs to the universal ribosomal protein uS7 family. As to quaternary structure, part of the 30S ribosomal subunit.

It is found in the plastid. Its subcellular location is the chloroplast. In terms of biological role, one of the primary rRNA binding proteins, it binds directly to 16S rRNA where it nucleates assembly of the head domain of the 30S subunit. The chain is Small ribosomal subunit protein uS7c (rps7) from Cryptomeria japonica (Japanese cedar).